Reading from the N-terminus, the 349-residue chain is DNA integrity scanning protein DisA (349 aa).

In terms of domain architecture, DAC spans 3–143; it reads KQDLMDIIVK…LKYRLKNFDE (141 aa). ATP contacts are provided by residues Gly-70, Val-88, and 101–105; that span reads TRHRT.

The protein belongs to the DisA family. Homooctamer. It depends on Mg(2+) as a cofactor.

It carries out the reaction 2 ATP = 3',3'-c-di-AMP + 2 diphosphate. Functionally, participates in a DNA-damage check-point. DisA forms globular foci that rapidly scan along the chromosomes searching for lesions. Its function is as follows. Also has diadenylate cyclase activity, catalyzing the condensation of 2 ATP molecules into cyclic di-AMP (c-di-AMP). c-di-AMP likely acts as a signaling molecule that may couple DNA integrity with a cellular process. The chain is DNA integrity scanning protein DisA from Fusobacterium nucleatum subsp. nucleatum (strain ATCC 25586 / DSM 15643 / BCRC 10681 / CIP 101130 / JCM 8532 / KCTC 2640 / LMG 13131 / VPI 4355).